The chain runs to 237 residues: Endoglucanase-1 (237 aa).

The first 16 residues, 1 to 16 (MKAFHLLAALAGAAVA), serve as a signal peptide directing secretion. The residue at position 17 (Gln-17) is a Pyrrolidone carboxylic acid.

It belongs to the glycosyl hydrolase 12 (cellulase H) family.

It localises to the secreted. The enzyme catalyses Endohydrolysis of (1-&gt;4)-beta-D-glucosidic linkages in cellulose, lichenin and cereal beta-D-glucans.. In Aspergillus aculeatus, this protein is Endoglucanase-1.